A 644-amino-acid polypeptide reads, in one-letter code: Uromodulin (644 aa).

The first 26 residues, 1–26, serve as a signal peptide directing secretion; that stretch reads MGQLLSLTWLLLVMVVTPWFTVAGAN. Residues 30-66 enclose the EGF-like 1 domain; sequence EARRCSECHDNATCVLDGVVTTCSCQAGFTGDGLVCE. Disulfide bonds link Cys34–Cys43, Cys37–Cys52, Cys54–Cys65, Cys71–Cys84, Cys79–Cys93, Cys95–Cys107, Cys113–Cys127, Cys121–Cys136, Cys138–Cys149, Cys151–Cys162, Cys156–Cys173, Cys177–Cys270, Cys198–Cys285, Cys220–Cys258, Cys226–Cys290, Cys251–Cys259, Cys300–Cys309, Cys303–Cys318, Cys320–Cys350, Cys338–Cys428, and Cys369–Cys392. An N-linked (GlcNAc...) asparagine glycan is attached at Asn40. The region spanning 67-108 is the EGF-like 2; calcium-binding domain; the sequence is DIDECATPWTHNCSNSICMNTLGSYECSCQDGFRLTPGLGCI. Asn78 carries an N-linked (GlcNAc...) asparagine glycan. An EGF-like 3; calcium-binding domain is found at 109–150; the sequence is DVNECTEQGLSNCHSLATCVNTEGSYSCVCPKGYRGDGWYCE. The segment at 151 to 174 is beta hairpin; it reads CSPGFCEPGLDCLPQGPSGKLVCQ. Positions 175 to 294 are D10C; that stretch reads DPCNVYETLT…CNLAYCTDPS (120 aa). Asn235 carries N-linked (GlcNAc...) asparagine glycosylation. An N-linked (GlcNAc...) asparagine glycan is attached at Asn278. One can recognise an EGF-like 4 domain in the interval 295–326; sequence SVEGTCEECGVDEDCVSDNGRWRCQCKQDFNV. Residue Asn325 is glycosylated (N-linked (GlcNAc...) asparagine). The tract at residues 337-432 is ZP-N; it reads ECEANEIKIS…RINFECSYPL (96 aa). The ZP domain maps to 337 to 592; sequence ECEANEIKIS…PTCSGTRYRS (256 aa). N-linked (GlcNAc...) asparagine glycosylation is found at Asn399 and Asn450. The flexible ZP-N/ZP-C linker; important for secretion and polymerization into filaments stretch occupies residues 433–456; the sequence is DMKVSLKTSLQPMVSALNISLGGT. Positions 457-467 are internal hydrophobic patch (IHP); that stretch reads GKFTVQMALFQ. The tract at residues 457–592 is ZP-C; the sequence is GKFTVQMALF…PTCSGTRYRS (136 aa). 3 disulfides stabilise this stretch: Cys509–Cys569, Cys530–Cys585, and Cys574–Cys581. Asn516 carries an N-linked (GlcNAc...) asparagine glycan. Residues 589 to 592 are essential for cleavage by HPN; the sequence is RYRS. Residues 601–609 form an external hydrophobic patch (EHP); regulates polymerization into filaments region; that stretch reads VLNLGPITR. Residue Ser615 is the site of GPI-anchor amidated serine attachment. Positions 616-644 are cleaved as a propeptide — removed in mature form; that stretch reads VSKAASSNLGFLSIWLLLFLSATLTLMVH.

In terms of assembly, homodimer that then polymerizes into long filaments. The filaments can additionally assemble laterally to form a sheet. The filaments consist of a zigzag-shaped backbone with laterally protruding arms which interact with bacterial adhesin fimH. Two fimH molecules can bind to a single UMOD monomer. N-glycosylated. Post-translationally, proteolytically cleaved at a conserved C-terminal proteolytic cleavage site to generate the secreted form found in urine. This cleavage is catalyzed by HPN. Expression restricted to the thick ascending limb of the loop of Henle (TALH).

The protein resides in the apical cell membrane. It is found in the basolateral cell membrane. Its subcellular location is the cell projection. The protein localises to the cilium membrane. It localises to the secreted. Functions in biogenesis and organization of the apical membrane of epithelial cells of the thick ascending limb of Henle's loop (TALH), where it promotes formation of complex filamentous gel-like structure that may play a role in the water barrier permeability. May serve as a receptor for binding and endocytosis of cytokines (IL-1, IL-2) and TNF. Facilitates neutrophil migration across renal epithelia. Functionally, in the urine, may contribute to colloid osmotic pressure, retards passage of positively charged electrolytes, and inhibits formation of liquid containing supersaturated salts and subsequent formation of salt crystals. Protects against urinary tract infections by binding to type 1 fimbriated E.coli. Binds to bacterial adhesin fimH which mediates the stable formation of bacterial aggregates, prevents the binding of E.coli to uroplakins UPK1A and UPK1B which act as urothelial receptors for type I fimbriae, and allows for pathogen clearance through micturation. Also promotes aggregation of other bacteria including K.pneumoniae, P.aeruginosa and S.mitis and so may also protect against other uropathogens. This Rattus norvegicus (Rat) protein is Uromodulin (Umod).